The chain runs to 392 residues: S-adenosylmethionine synthase (392 aa).

Residue H17 coordinates ATP. Mg(2+) is bound at residue D19. E45 contacts K(+). E58 and Q102 together coordinate L-methionine. Residues 102-112 form a flexible loop region; the sequence is QSADIAQGVDA. ATP-binding positions include 169–171, 235–236, D244, 250–251, A267, and K271; these read DAK, KF, and RK. D244 is an L-methionine binding site. K275 serves as a coordination point for L-methionine.

Belongs to the AdoMet synthase family. Homotetramer; dimer of dimers. Mg(2+) serves as cofactor. K(+) is required as a cofactor.

The protein resides in the cytoplasm. The enzyme catalyses L-methionine + ATP + H2O = S-adenosyl-L-methionine + phosphate + diphosphate. The protein operates within amino-acid biosynthesis; S-adenosyl-L-methionine biosynthesis; S-adenosyl-L-methionine from L-methionine: step 1/1. Its function is as follows. Catalyzes the formation of S-adenosylmethionine (AdoMet) from methionine and ATP. The overall synthetic reaction is composed of two sequential steps, AdoMet formation and the subsequent tripolyphosphate hydrolysis which occurs prior to release of AdoMet from the enzyme. The sequence is that of S-adenosylmethionine synthase from Methylobacterium sp. (strain 4-46).